The chain runs to 181 residues: Putative manganese efflux pump MntP (181 aa).

The next 5 helical transmembrane spans lie at 35-55 (IIFG…GSIA), 59-79 (VADW…LLMI), 102-122 (AATG…LAFI), 126-146 (ILIT…LGVM), and 161-181 (ILGG…HLTM).

The protein belongs to the MntP (TC 9.B.29) family.

The protein localises to the cell inner membrane. Its function is as follows. Probably functions as a manganese efflux pump. The chain is Putative manganese efflux pump MntP from Nitrosomonas eutropha (strain DSM 101675 / C91 / Nm57).